A 490-amino-acid chain; its full sequence is MDLVTFLVLTLSSLILLSLWRQSCGRGSLPPGPTPFPIIGNFLQIDIKNVSQSLTNFSKAYGPVFTLYLGSRPTVVLHGYEAVKEALIDHGEEFSDRGSIPMVEKINNGLGIVFSNGNRWKEIRRFTLTTLRNLGMGKRNIEDRVQEEAQCLVEELRKTKGSPCDPTFILSCAPCNVICSIIFQDRFDYKDKDFLMLMEKLNENVKILSSPWLQVCNNFPLLIDYCPGSHHKVLKNVKYIRSYLLEKIKEHQESLDVTNPRDFIDYYLIKQKQANHIQQAEFSLENLACTINNLFAAGTETTSTTLRYALLLLMKYPDVTAKVQEEIDHVIGRHRSPCMQDRNHMPYTDAMIHEVQRFINLVPNNIPRAVTCDIKFRNYLIPKGTTVVTSLTSVLHDSKEFPNPELFDPGHFLDANGNFKKSDHFMPFSAGKRVCAGEGLARMELFLFLTTILQNFKLKSLVHPKDIDMIPFVNGLIALPPHYQVCIIPR.

The N-terminal stretch at 1-25 (MDLVTFLVLTLSSLILLSLWRQSCG) is a signal peptide. Cysteine 435 is a heme binding site.

It belongs to the cytochrome P450 family. Requires heme as cofactor. As to expression, liver.

The protein resides in the endoplasmic reticulum membrane. It is found in the microsome membrane. The enzyme catalyses an organic molecule + reduced [NADPH--hemoprotein reductase] + O2 = an alcohol + oxidized [NADPH--hemoprotein reductase] + H2O + H(+). It carries out the reaction (5Z,8Z,11Z,14Z)-eicosatetraenoate + reduced [NADPH--hemoprotein reductase] + O2 = 11,12-epoxy-(5Z,8Z,14Z)-eicosatrienoate + oxidized [NADPH--hemoprotein reductase] + H2O + H(+). The catalysed reaction is (5Z,8Z,11Z,14Z)-eicosatetraenoate + reduced [NADPH--hemoprotein reductase] + O2 = 14,15-epoxy-(5Z,8Z,11Z)-eicosatrienoate + oxidized [NADPH--hemoprotein reductase] + H2O + H(+). Its pathway is lipid metabolism; arachidonate metabolism. Its function is as follows. A cytochrome P450 monooxygenase that primarily catalyzes the epoxidation of 11,12 and 14,15 double bonds of (5Z,8Z,11Z,14Z)-eicosatetraenoic acid (arachidonate) forming 11,12- and 14,15-epoxyeicosatrienoic acids (11,12- and 14,15-EET) regioisomers. Mechanistically, uses molecular oxygen inserting one oxygen atom into a substrate, and reducing the second into a water molecule, with two electrons provided by NADPH via cytochrome P450 reductase (CPR; NADPH--hemoprotein reductase). The protein is Cytochrome P450 2C39 of Mus musculus (Mouse).